A 128-amino-acid polypeptide reads, in one-letter code: Disintegrin EO4A (128 aa).

A signal peptide spans 1 to 20 (MIPVLLVTICLAVFPFQGSS). Positions 21-47 (IILESGNINDYEIVYPKKVNVLPTGAM) are excised as a propeptide. Residues 26-112 (GNINDYEIVY…DCPRNPYKGK (87 aa)) enclose the Disintegrin domain. 4 cysteine pairs are disulfide-bonded: C53/C76, C67/C73, C72/C97, and C85/C104. Residues 89 to 91 (RGD) carry the Cell attachment site motif. Residues 115 to 128 (PMKWPAAAKGSVLM) constitute a propeptide that is removed on maturation.

The protein belongs to the disintegrin family. Dimeric disintegrin subfamily. In terms of assembly, heterodimer with EO5B; disulfide-linked. In terms of tissue distribution, expressed by the venom gland.

It localises to the secreted. Poor inhibitor of platelet aggregation. The disintegrin inhibits the adhesion of cells expressing the RGD-dependent integrin alpha-5/beta-1 (ITGA5/ITGB1) to immobilized fibronectin. Inhibition on alpha-2b/beta-3 (ITGA2B/ITGB3) is low. The sequence is that of Disintegrin EO4A from Echis ocellatus (Ocellated saw-scaled viper).